We begin with the raw amino-acid sequence, 257 residues long: Acetylglutamate kinase (257 aa).

Residues Gly41 to Gly42, Arg63, and Asn158 each bind substrate.

It belongs to the acetylglutamate kinase family. ArgB subfamily.

The protein resides in the cytoplasm. The enzyme catalyses N-acetyl-L-glutamate + ATP = N-acetyl-L-glutamyl 5-phosphate + ADP. It participates in amino-acid biosynthesis; L-arginine biosynthesis; N(2)-acetyl-L-ornithine from L-glutamate: step 2/4. Its function is as follows. Catalyzes the ATP-dependent phosphorylation of N-acetyl-L-glutamate. This chain is Acetylglutamate kinase, found in Phocaeicola vulgatus (strain ATCC 8482 / DSM 1447 / JCM 5826 / CCUG 4940 / NBRC 14291 / NCTC 11154) (Bacteroides vulgatus).